Reading from the N-terminus, the 189-residue chain is MINTQDSSILPLSKCPQLQCCRHIVPGPLWCSDAPHPLSKIPGGRGGGRDPSLSALIYKDEKLTVTQDLPVNDGKPHIVHFQYEVTEVKVSSWDAVLSSQSLFVEIPDGLLADGSKEGLLALLEFAEEKMKVNYVFICFRKGREDRAPLLKTFSFLGFEIVRPGHPCVPSRPDVMFMVYPLDQNLSDED.

Ser186 is subject to Phosphoserine.

This sequence belongs to the ODC antizyme family. Interacts with ODC1 and thereby sterically blocks ODC homodimerization. Interacts with AZIN2; this interaction disrupts the interaction between the antizyme and ODC1.

The protein localises to the nucleus. In terms of biological role, ornithine decarboxylase (ODC) antizyme protein that negatively regulates ODC activity and intracellular polyamine biosynthesis and uptake in response to increased intracellular polyamine levels. Binds to ODC monomers, inhibiting the assembly of the functional ODC homodimers. Does not target the ODC monomers for degradation, which allows a protein synthesis-independent restoration of ODC activity. Involved in the translocation of AZIN2 from ER-Golgi intermediate compartment (ERGIC) to the cytosol. This Mus musculus (Mouse) protein is Ornithine decarboxylase antizyme 2 (Oaz2).